Consider the following 621-residue polypeptide: 1,4-alpha-glucan branching enzyme GlgB (621 aa).

Catalysis depends on D302, which acts as the Nucleophile. Catalysis depends on E355, which acts as the Proton donor.

It belongs to the glycosyl hydrolase 13 family. GlgB subfamily. In terms of assembly, monomer.

The catalysed reaction is Transfers a segment of a (1-&gt;4)-alpha-D-glucan chain to a primary hydroxy group in a similar glucan chain.. The protein operates within glycan biosynthesis; glycogen biosynthesis. Its function is as follows. Catalyzes the formation of the alpha-1,6-glucosidic linkages in glycogen by scission of a 1,4-alpha-linked oligosaccharide from growing alpha-1,4-glucan chains and the subsequent attachment of the oligosaccharide to the alpha-1,6 position. In Dechloromonas aromatica (strain RCB), this protein is 1,4-alpha-glucan branching enzyme GlgB.